Here is a 212-residue protein sequence, read N- to C-terminus: Pyridoxine/pyridoxamine 5'-phosphate oxidase (212 aa).

Substrate contacts are provided by residues 8–11 (RREY) and lysine 66. Residues 61–66 (RIVLLK), 76–77 (FT), arginine 82, lysine 83, and glutamine 105 each bind FMN. Positions 123, 127, and 131 each coordinate substrate. FMN contacts are provided by residues 140–141 (QS) and tryptophan 185. 191-193 (RLH) contacts substrate. FMN is bound at residue arginine 195.

This sequence belongs to the pyridoxamine 5'-phosphate oxidase family. In terms of assembly, homodimer. The cofactor is FMN.

The enzyme catalyses pyridoxamine 5'-phosphate + O2 + H2O = pyridoxal 5'-phosphate + H2O2 + NH4(+). The catalysed reaction is pyridoxine 5'-phosphate + O2 = pyridoxal 5'-phosphate + H2O2. The protein operates within cofactor metabolism; pyridoxal 5'-phosphate salvage; pyridoxal 5'-phosphate from pyridoxamine 5'-phosphate: step 1/1. Its pathway is cofactor metabolism; pyridoxal 5'-phosphate salvage; pyridoxal 5'-phosphate from pyridoxine 5'-phosphate: step 1/1. Functionally, catalyzes the oxidation of either pyridoxine 5'-phosphate (PNP) or pyridoxamine 5'-phosphate (PMP) into pyridoxal 5'-phosphate (PLP). The sequence is that of Pyridoxine/pyridoxamine 5'-phosphate oxidase from Shewanella baltica (strain OS155 / ATCC BAA-1091).